We begin with the raw amino-acid sequence, 601 residues long: Glutathione-regulated potassium-efflux system protein KefB (601 aa).

A run of 13 helical transmembrane segments spans residues 4-24, 29-49, 55-75, 87-107, 111-131, 152-172, 177-197, 207-227, 230-250, 262-282, 284-304, 324-344, and 356-376; these read ADLL…VPLA, IGAV…GLGF, EILH…GLEL, IFGV…GLLM, FLWQ…TAMA, VLLF…LLAG, HFDW…LIGG, FIAA…LVLS, LFMD…GVLL, AIDP…GMSL, LGVL…LVVI, MQFA…FSTA, and ALLL…MKGI. One can recognise an RCK N-terminal domain in the interval 400-519; that stretch reads KPQVIVVGFG…AGVTQFSRET (120 aa).

Belongs to the monovalent cation:proton antiporter 2 (CPA2) transporter (TC 2.A.37) family. KefB subfamily. Interacts with the regulatory subunit KefG.

Its subcellular location is the cell inner membrane. Pore-forming subunit of a potassium efflux system that confers protection against electrophiles. Catalyzes K(+)/H(+) antiport. The sequence is that of Glutathione-regulated potassium-efflux system protein KefB from Salmonella enteritidis PT4 (strain P125109).